A 200-amino-acid chain; its full sequence is MPKVGMPDIRKPQLVQATMTVIDRVGLHAASIALISKEAGVSTGIINHYFGGKHGLLEETMREILRQLSNTVTTELKALPADAHQQRINAIINGNFEGYQAENKVSKTWLAFWSYSMHDAQLKRLQRVNEKRLISHLLIELKSIFQPDQAELIAHGIASLIDGIWLRGTLNPEGINADKARAIINDYLDKQLTFYSCQRD.

The region spanning 8-68 is the HTH tetR-type domain; sequence DIRKPQLVQA…ETMREILRQL (61 aa). The segment at residues 31–50 is a DNA-binding region (H-T-H motif); it reads SIALISKEAGVSTGIINHYF.

Its pathway is amine and polyamine biosynthesis; betaine biosynthesis via choline pathway [regulation]. Functionally, repressor involved in the biosynthesis of the osmoprotectant glycine betaine. It represses transcription of the choline transporter BetT and the genes of BetAB involved in the synthesis of glycine betaine. This is HTH-type transcriptional regulator BetI from Vibrio atlanticus (strain LGP32) (Vibrio splendidus (strain Mel32)).